The chain runs to 91 residues: Heat shock protein 30E (91 aa).

The tract at residues 62 to 91 (RDQIRQPGAPESEGTSPNTGKDGKDPGNSL) is disordered. A compositionally biased stretch (basic and acidic residues) spans 82 to 91 (KDGKDPGNSL).

It belongs to the small heat shock protein (HSP20) family.

The protein is Heat shock protein 30E (hsp30e) of Xenopus laevis (African clawed frog).